A 261-amino-acid chain; its full sequence is Pimeloyl-[acyl-carrier protein] methyl ester esterase (261 aa).

Positions 16 to 241 constitute an AB hydrolase-1 domain; the sequence is LVLLHGWGLN…HAAHAPFISH (226 aa). Substrate contacts are provided by residues tryptophan 22, 82–83, and 143–147; these read SL and FLALQ. Catalysis depends on serine 82, which acts as the Nucleophile. Residues aspartate 207 and histidine 235 contribute to the active site. Histidine 235 provides a ligand contact to substrate.

This sequence belongs to the AB hydrolase superfamily. Carboxylesterase BioH family. As to quaternary structure, monomer.

The protein localises to the cytoplasm. The enzyme catalyses 6-carboxyhexanoyl-[ACP] methyl ester + H2O = 6-carboxyhexanoyl-[ACP] + methanol + H(+). It participates in cofactor biosynthesis; biotin biosynthesis. Its function is as follows. The physiological role of BioH is to remove the methyl group introduced by BioC when the pimeloyl moiety is complete. It allows to synthesize pimeloyl-ACP via the fatty acid synthetic pathway through the hydrolysis of the ester bonds of pimeloyl-ACP esters. This chain is Pimeloyl-[acyl-carrier protein] methyl ester esterase, found in Photorhabdus laumondii subsp. laumondii (strain DSM 15139 / CIP 105565 / TT01) (Photorhabdus luminescens subsp. laumondii).